The sequence spans 43 residues: Protein PsbN (43 aa).

The chain crosses the membrane as a helical span at residues Thr-5 to Phe-27.

Belongs to the PsbN family.

It localises to the plastid. Its subcellular location is the chloroplast thylakoid membrane. Its function is as follows. May play a role in photosystem I and II biogenesis. The sequence is that of Protein PsbN from Phaseolus vulgaris (Kidney bean).